A 118-amino-acid chain; its full sequence is UPF0058 protein MJ1132 (118 aa).

The protein belongs to the UPF0058 family.

The sequence is that of UPF0058 protein MJ1132 from Methanocaldococcus jannaschii (strain ATCC 43067 / DSM 2661 / JAL-1 / JCM 10045 / NBRC 100440) (Methanococcus jannaschii).